Reading from the N-terminus, the 354-residue chain is MESALAVPRLPPHDPGTPVLSVVDMHTGGEPLRIVLAGCPEVSGPTLLAKRRYMRQHLDHVRRRLMFEPRGHRDMYGAVLVPSELPDAHLGVLFLHNEGYSSMCGHAVLALGRFALDFGLVPAPPAGTREARVNIHCPCGLVTAFVACEDGRSHGPVRFHSVPAFVLATDLMVDVPGHGKVMVDIAYGGAFYAFVTAEKLGLDICSAKTRDLVDAASAVTEAVKAQFKINHPDSEDLAFLYGTILTDGKDAYTKEPTTNICVFADEQVDRSPTGSGVTARIALQYHKGLLELNQMRAFKSSATGSVFTGKAVREAKCGDFKAVIVEVSGQAHYTGTASFIIEDDDPLRDGFLLK.

C104 functions as the Proton acceptor in the catalytic mechanism. Substrate-binding positions include 105–106, D269, and 274–275; these read GH and GS.

The protein belongs to the proline racemase family. Homodimer. Ubiquitously expressed.

It catalyses the reaction trans-3-hydroxy-L-proline = 1-pyrroline-2-carboxylate + H2O. Catalyzes the dehydration of trans-3-hydroxy-L-proline to Delta(1)-pyrroline-2-carboxylate (Pyr2C). May be required to degrade trans-3-hydroxy-L-proline from the diet and originating from the degradation of proteins such as collagen-IV that contain it. In Homo sapiens (Human), this protein is Trans-3-hydroxy-L-proline dehydratase (L3HYPDH).